The sequence spans 319 residues: Lipoyl synthase (319 aa).

A disordered region spans residues aspartate 6–proline 29. Over residues arginine 16 to proline 29 the composition is skewed to basic and acidic residues. [4Fe-4S] cluster contacts are provided by cysteine 61, cysteine 66, cysteine 72, cysteine 87, cysteine 91, cysteine 94, and serine 300. One can recognise a Radical SAM core domain in the interval tryptophan 73–leucine 289.

Belongs to the radical SAM superfamily. Lipoyl synthase family. [4Fe-4S] cluster is required as a cofactor.

The protein localises to the cytoplasm. It carries out the reaction [[Fe-S] cluster scaffold protein carrying a second [4Fe-4S](2+) cluster] + N(6)-octanoyl-L-lysyl-[protein] + 2 oxidized [2Fe-2S]-[ferredoxin] + 2 S-adenosyl-L-methionine + 4 H(+) = [[Fe-S] cluster scaffold protein] + N(6)-[(R)-dihydrolipoyl]-L-lysyl-[protein] + 4 Fe(3+) + 2 hydrogen sulfide + 2 5'-deoxyadenosine + 2 L-methionine + 2 reduced [2Fe-2S]-[ferredoxin]. It participates in protein modification; protein lipoylation via endogenous pathway; protein N(6)-(lipoyl)lysine from octanoyl-[acyl-carrier-protein]: step 2/2. In terms of biological role, catalyzes the radical-mediated insertion of two sulfur atoms into the C-6 and C-8 positions of the octanoyl moiety bound to the lipoyl domains of lipoate-dependent enzymes, thereby converting the octanoylated domains into lipoylated derivatives. This Rhodopseudomonas palustris (strain ATCC BAA-98 / CGA009) protein is Lipoyl synthase.